The primary structure comprises 429 residues: Glucose-1-phosphate adenylyltransferase (429 aa).

Alpha-D-glucose 1-phosphate-binding positions include Gly162, 177-178 (EK), and Ser209.

Belongs to the bacterial/plant glucose-1-phosphate adenylyltransferase family. Homotetramer.

It catalyses the reaction alpha-D-glucose 1-phosphate + ATP + H(+) = ADP-alpha-D-glucose + diphosphate. The protein operates within glycan biosynthesis; glycogen biosynthesis. In terms of biological role, involved in the biosynthesis of ADP-glucose, a building block required for the elongation reactions to produce glycogen. Catalyzes the reaction between ATP and alpha-D-glucose 1-phosphate (G1P) to produce pyrophosphate and ADP-Glc. This is Glucose-1-phosphate adenylyltransferase from Gloeothece citriformis (strain PCC 7424) (Cyanothece sp. (strain PCC 7424)).